Reading from the N-terminus, the 502-residue chain is MSQEKYIMAIDQGTTSSRAIIFNKKGEKVSSSQKEFTQIFPQAGWVEHNANEIWNSVQSVIAGAFIESGVKPNQIEAIGITNQRETTVVWDKKTGLPIYNAIVWQSRQTAPLAEQLKNQGYVEKFHEKTGLIIDAYFSATKVRWILDHVEGAQERAEKGELLFGTIDTWLVWKLTDGAAHVTDYSNAARTMLYNIKELKWDDEILEILNIPKAILPEVRSNSEIYGKTAPFHFYGGEVPISGMAGDQQAALFGQLAFEPGMVKNTYGTGSFIIMNTGEEMQLSENNLLTTIGYGINGKVYYALEGSIFIAGSAIQWLRDGLRMVENSPESEKYARDSHNNDEVYVVPAFTGLGAPYWNQNARGSVFGLTRGTSKEDFIKATLQSIAYQVRDIIDTMQVDTQTAIQVLKVDGGAAMNNFLMQFQADILGIDIARAKNLETTALGAAFLAGLSVGYWKDLDELKLLNETGELFEPSMNESRKEQLYKGWKKAVKATQVFAEVDD.

Residue Thr14 coordinates ADP. Thr14, Thr15, and Ser16 together coordinate ATP. Thr14 contributes to the sn-glycerol 3-phosphate binding site. An ADP-binding site is contributed by Arg18. Residues Arg84, Glu85, and Tyr136 each coordinate sn-glycerol 3-phosphate. Glycerol contacts are provided by Arg84, Glu85, and Tyr136. Residue His232 is modified to Phosphohistidine; by HPr. Asp246 contributes to the sn-glycerol 3-phosphate binding site. Positions 246 and 247 each coordinate glycerol. Residues Thr268 and Gly311 each coordinate ADP. ATP contacts are provided by Thr268, Gly311, Gln315, and Gly412. Gly412 and Asn416 together coordinate ADP.

Belongs to the FGGY kinase family. As to quaternary structure, homotetramer and homodimer (in equilibrium). In terms of processing, the phosphoenolpyruvate-dependent sugar phosphotransferase system (PTS), including enzyme I, and histidine-containing protein (HPr) are required for the phosphorylation, which leads to the activation of the enzyme.

It carries out the reaction glycerol + ATP = sn-glycerol 3-phosphate + ADP + H(+). Its pathway is polyol metabolism; glycerol degradation via glycerol kinase pathway; sn-glycerol 3-phosphate from glycerol: step 1/1. Activated by phosphorylation and inhibited by fructose 1,6-bisphosphate (FBP). Key enzyme in the regulation of glycerol uptake and metabolism. Catalyzes the phosphorylation of glycerol to yield sn-glycerol 3-phosphate. The sequence is that of Glycerol kinase from Streptococcus pneumoniae (strain ATCC 700669 / Spain 23F-1).